The chain runs to 256 residues: Zinc import ATP-binding protein ZnuC (256 aa).

One can recognise an ABC transporter domain in the interval 6 to 221; sequence IAAEGLSIRV…PEYRALFGTG (216 aa). 38 to 45 is an ATP binding site; sequence GPNGSGKS. Residues 237-256 form a disordered region; it reads HDDDCGHDHGAEHMHPHGDR.

Belongs to the ABC transporter superfamily. Zinc importer (TC 3.A.1.15.5) family. The complex is composed of two ATP-binding proteins (ZnuC), two transmembrane proteins (ZnuB) and a solute-binding protein (ZnuA).

Its subcellular location is the cell inner membrane. The catalysed reaction is Zn(2+)(out) + ATP(in) + H2O(in) = Zn(2+)(in) + ADP(in) + phosphate(in) + H(+)(in). Part of the ABC transporter complex ZnuABC involved in zinc import. Responsible for energy coupling to the transport system. The protein is Zinc import ATP-binding protein ZnuC of Ruegeria pomeroyi (strain ATCC 700808 / DSM 15171 / DSS-3) (Silicibacter pomeroyi).